We begin with the raw amino-acid sequence, 351 residues long: Columbamine O-methyltransferase (351 aa).

Gly-198, Asp-221, Asp-241, Met-242, and Lys-255 together coordinate S-adenosyl-L-methionine. Catalysis depends on His-259, which acts as the Proton acceptor.

This sequence belongs to the class I-like SAM-binding methyltransferase superfamily. Cation-independent O-methyltransferase family. COMT subfamily. Homodimer.

It catalyses the reaction columbamine + S-adenosyl-L-methionine = palmatine + S-adenosyl-L-homocysteine + H(+). The catalysed reaction is (S)-tetrahydrocolumbamine + S-adenosyl-L-methionine = (S)-tetrahydropalmatine + S-adenosyl-L-homocysteine + H(+). It functions in the pathway alkaloid biosynthesis; palmatine biosynthesis; palmatine from columbamine: step 1/1. Its function is as follows. Catalyzes the conversion of tetrahydrocolumbamine to (S)-tetrahydropalmatine and of columbamine to palmatine, an isoquinoline alkaloid. This Coptis japonica (Japanese goldthread) protein is Columbamine O-methyltransferase.